A 236-amino-acid chain; its full sequence is tRNA (guanine-N(7)-)-methyltransferase (236 aa).

Residues 1-17 (MSERKSDPDRDDSERAF) are compositionally biased toward basic and acidic residues. Positions 1 to 23 (MSERKSDPDRDDSERAFFGRRKG) are disordered. Residues Glu-67, Glu-92, Asp-119, and Asp-141 each contribute to the S-adenosyl-L-methionine site. Asp-141 is a catalytic residue. The substrate site is built by Lys-145 and Asp-177.

Belongs to the class I-like SAM-binding methyltransferase superfamily. TrmB family.

The catalysed reaction is guanosine(46) in tRNA + S-adenosyl-L-methionine = N(7)-methylguanosine(46) in tRNA + S-adenosyl-L-homocysteine. It participates in tRNA modification; N(7)-methylguanine-tRNA biosynthesis. Its function is as follows. Catalyzes the formation of N(7)-methylguanine at position 46 (m7G46) in tRNA. This is tRNA (guanine-N(7)-)-methyltransferase from Bradyrhizobium diazoefficiens (strain JCM 10833 / BCRC 13528 / IAM 13628 / NBRC 14792 / USDA 110).